A 348-amino-acid polypeptide reads, in one-letter code: Selenide, water dikinase (348 aa).

Residue cysteine 17 is part of the active site. ATP-binding positions include lysine 20 and 48 to 50 (TRD). Aspartate 51 is a Mg(2+) binding site. ATP-binding positions include aspartate 68, aspartate 91, and 139 to 141 (GHS). Residue aspartate 91 coordinates Mg(2+). Aspartate 227 is a Mg(2+) binding site.

This sequence belongs to the selenophosphate synthase 1 family. Class I subfamily. As to quaternary structure, homodimer. The cofactor is Mg(2+).

It catalyses the reaction hydrogenselenide + ATP + H2O = selenophosphate + AMP + phosphate + 2 H(+). Its function is as follows. Synthesizes selenophosphate from selenide and ATP. The polypeptide is Selenide, water dikinase (Yersinia pseudotuberculosis serotype I (strain IP32953)).